Consider the following 187-residue polypeptide: Ribonuclease HII (187 aa).

The RNase H type-2 domain maps to 1–187 (MIILGIDEAG…YKPVQVLLNE (187 aa)). Residues Asp7, Glu8, and Asp99 each contribute to the a divalent metal cation site.

The protein belongs to the RNase HII family. Requires Mn(2+) as cofactor. It depends on Mg(2+) as a cofactor.

The protein resides in the cytoplasm. The catalysed reaction is Endonucleolytic cleavage to 5'-phosphomonoester.. Endonuclease that specifically degrades the RNA of RNA-DNA hybrids. The sequence is that of Ribonuclease HII from Francisella tularensis subsp. mediasiatica (strain FSC147).